Consider the following 482-residue polypeptide: ADP-ribosylation factor GTPase-activating protein effector protein 1 (482 aa).

Residues 116 to 156 form a disordered region; sequence QHKSTHSHHINHQTHPIHSSSSNSNSNNRIPTKTDSSKQHT. Positions 118–127 are enriched in basic residues; the sequence is KSTHSHHINH. The span at 134-143 shows a compositional bias: low complexity; sequence SSSSNSNSNN. Positions 170–297 constitute an Arf-GAP domain; it reads DELLSIVRKI…FVIDSNQGRE (128 aa). The C4-type zinc-finger motif lies at 186 to 210; sequence CCDCGSTATVEWVSINLLCILCIKC.

The protein localises to the cytoplasm. In terms of biological role, GTPase-activating protein (GAP) for the ADP ribosylation factors ARF1 and ARF2. May be involved in the endocytic pathway. The chain is ADP-ribosylation factor GTPase-activating protein effector protein 1 (AGE1) from Saccharomyces cerevisiae (strain ATCC 204508 / S288c) (Baker's yeast).